The following is a 213-amino-acid chain: LexA repressor (213 aa).

The segment at residues 27–47 is a DNA-binding region (H-T-H motif); that stretch reads QTEIARAFGFKGIRAAQYHLE. Residues serine 133 and lysine 170 each act as for autocatalytic cleavage activity in the active site.

This sequence belongs to the peptidase S24 family. In terms of assembly, homodimer.

It carries out the reaction Hydrolysis of Ala-|-Gly bond in repressor LexA.. Functionally, represses a number of genes involved in the response to DNA damage (SOS response), including recA and lexA. Has been shown to bind to the palindromic sequence 5'-CTG-N(8-12)-C-[TC]-G. In the presence of single-stranded DNA, RecA interacts with LexA causing an autocatalytic cleavage which disrupts the DNA-binding part of LexA, leading to derepression of the SOS regulon and eventually DNA repair. In Xanthomonas citri (Xanthomonas campestris pv. citri), this protein is LexA repressor.